Here is a 149-residue protein sequence, read N- to C-terminus: uncharacterized protein (149 aa).

Residues 1–149 (MNIRQAKTSD…VHYCLNVPAK (149 aa)) form the N-acetyltransferase domain.

The protein belongs to the acetyltransferase family.

This is an uncharacterized protein from Bacillus subtilis (strain 168).